The chain runs to 122 residues: Large ribosomal subunit protein uL14 (122 aa).

This sequence belongs to the universal ribosomal protein uL14 family. As to quaternary structure, part of the 50S ribosomal subunit. Forms a cluster with proteins L3 and L19. In the 70S ribosome, L14 and L19 interact and together make contacts with the 16S rRNA in bridges B5 and B8.

Its function is as follows. Binds to 23S rRNA. Forms part of two intersubunit bridges in the 70S ribosome. The sequence is that of Large ribosomal subunit protein uL14 from Neisseria meningitidis serogroup C (strain 053442).